The chain runs to 497 residues: Cytochrome P450 71A12 (497 aa).

Residues 4–24 (ILMVSLCLTTLITLFLLKQFL) form a helical membrane-spanning segment. Cys439 contributes to the heme binding site.

The protein belongs to the cytochrome P450 family. Heme serves as cofactor.

The protein localises to the membrane. Converts indole-3-acetaldoxime to indole cyanohydrin. Involved in the biosynthetic pathway to 4-hydroxyindole-3-carbonyl nitrile (4-OH-ICN), a cyanogenic metabolite required for inducible pathogen defense. In Arabidopsis thaliana (Mouse-ear cress), this protein is Cytochrome P450 71A12 (CYP71A12).